A 336-amino-acid chain; its full sequence is HTH-type transcriptional regulator RafR (336 aa).

The HTH lacI-type domain maps to 2–55; sequence SLKAIATTLGISVTTVSRALGGFSDVAASTRERVEAEARRRGYRPNTQARRLKT. Residues 3–22 constitute a DNA-binding region (H-T-H motif); it reads LKAIATTLGISVTTVSRALG.

Homodimer.

Repressor that negatively controls the expression of the raffinose (raf) operon by binding to the raf operator (rafO) DNA. Acts by binding to two operator sites, O1 and 02, which flank the -35 raf promoter box. RafR bound to 02 alone results in 45 % repression of transcription, whereas RafR bound to O1 leads to only 6% repression. The chain is HTH-type transcriptional regulator RafR from Escherichia coli.